Consider the following 331-residue polypeptide: MNIVYFGTPEFALAPLQRLLQTETYQVLGVVTQPDRRRGRGNQLSPSPVKAFALRHGLPIWQPPRLRQDPQLPEVLRSLAADVFVVVAYGQILPQSILDIPRYGCINIHGSLLPRYRGAAPIQWALYHGEEETGVTTMLMDAGLDTGPMLLKRKVRIHLEDNATTLSAKLSETGADLLLDTLQQLPQLQAEPQNDAEATYAPLIQKSDYAIDWGRSALALHNQVRAFYPYAYTQWQGTALKILQTWPLIPEVAAKLPEPLQSYVREPEAAAPPGTVLALIKGWGPVVQTGKGPLLLSQVQLSGRKAQSGWDFVNGVRLAIATQFAIVPSAL.

111–114 (SLLP) contributes to the (6S)-5,6,7,8-tetrahydrofolate binding site.

The protein belongs to the Fmt family.

The enzyme catalyses L-methionyl-tRNA(fMet) + (6R)-10-formyltetrahydrofolate = N-formyl-L-methionyl-tRNA(fMet) + (6S)-5,6,7,8-tetrahydrofolate + H(+). In terms of biological role, attaches a formyl group to the free amino group of methionyl-tRNA(fMet). The formyl group appears to play a dual role in the initiator identity of N-formylmethionyl-tRNA by promoting its recognition by IF2 and preventing the misappropriation of this tRNA by the elongation apparatus. The chain is Methionyl-tRNA formyltransferase from Thermosynechococcus vestitus (strain NIES-2133 / IAM M-273 / BP-1).